The sequence spans 226 residues: PKHD-type hydroxylase PP_0862 (226 aa).

The Fe2OG dioxygenase domain maps to 78–178; that stretch reads KVFPPLINCY…RYAAFFWTQS (101 aa). Fe cation contacts are provided by His-96, Asp-98, and His-159. Arg-169 serves as a coordination point for 2-oxoglutarate.

It depends on Fe(2+) as a cofactor. Requires L-ascorbate as cofactor.

The polypeptide is PKHD-type hydroxylase PP_0862 (Pseudomonas putida (strain ATCC 47054 / DSM 6125 / CFBP 8728 / NCIMB 11950 / KT2440)).